Here is a 644-residue protein sequence, read N- to C-terminus: 1-deoxy-D-xylulose-5-phosphate synthase (644 aa).

Residues His-78 and 120–122 (GHA) each bind thiamine diphosphate. Asp-150 provides a ligand contact to Mg(2+). Residues 151-152 (AA), Asn-179, and Glu-374 contribute to the thiamine diphosphate site. A Mg(2+)-binding site is contributed by Asn-179.

This sequence belongs to the transketolase family. DXPS subfamily. Homodimer. The cofactor is Mg(2+). Thiamine diphosphate serves as cofactor.

The enzyme catalyses D-glyceraldehyde 3-phosphate + pyruvate + H(+) = 1-deoxy-D-xylulose 5-phosphate + CO2. Its pathway is metabolic intermediate biosynthesis; 1-deoxy-D-xylulose 5-phosphate biosynthesis; 1-deoxy-D-xylulose 5-phosphate from D-glyceraldehyde 3-phosphate and pyruvate: step 1/1. Functionally, catalyzes the acyloin condensation reaction between C atoms 2 and 3 of pyruvate and glyceraldehyde 3-phosphate to yield 1-deoxy-D-xylulose-5-phosphate (DXP). This Chlamydia pneumoniae (Chlamydophila pneumoniae) protein is 1-deoxy-D-xylulose-5-phosphate synthase.